The primary structure comprises 226 residues: 2-C-methyl-D-erythritol 4-phosphate cytidylyltransferase (226 aa).

Belongs to the IspD/TarI cytidylyltransferase family. IspD subfamily.

It carries out the reaction 2-C-methyl-D-erythritol 4-phosphate + CTP + H(+) = 4-CDP-2-C-methyl-D-erythritol + diphosphate. The protein operates within isoprenoid biosynthesis; isopentenyl diphosphate biosynthesis via DXP pathway; isopentenyl diphosphate from 1-deoxy-D-xylulose 5-phosphate: step 2/6. Its function is as follows. Catalyzes the formation of 4-diphosphocytidyl-2-C-methyl-D-erythritol from CTP and 2-C-methyl-D-erythritol 4-phosphate (MEP). This chain is 2-C-methyl-D-erythritol 4-phosphate cytidylyltransferase, found in Microcystis aeruginosa (strain NIES-843 / IAM M-2473).